The following is a 160-amino-acid chain: Protein-export protein SecB (160 aa).

It belongs to the SecB family. Homotetramer, a dimer of dimers. One homotetramer interacts with 1 SecA dimer.

The protein localises to the cytoplasm. Its function is as follows. One of the proteins required for the normal export of preproteins out of the cell cytoplasm. It is a molecular chaperone that binds to a subset of precursor proteins, maintaining them in a translocation-competent state. It also specifically binds to its receptor SecA. The chain is Protein-export protein SecB from Rhizobium etli (strain ATCC 51251 / DSM 11541 / JCM 21823 / NBRC 15573 / CFN 42).